The chain runs to 1037 residues: MWRCGGRQGLCVLRRLSGGHAHHRAWRWNSNRACERALQYKLGDKIHGFTVNQVTSVPELFLTAVKLTHDDTGARYLHLAREDTNNLFSVQFRTTPMDSTGVPHILEHTVLCGSQKYPCRDPFFKMLNRSLSTFMNAFTASDYTLYPFSTQNPKDFQNLLSVYLDATFFPCLRELDFWQEGWRLEHENPSDPQTPLVFKGVVFNEMKGAFTDNERIFSQHLQNRLLPDHTYSVVSGGDPLCIPELTWEQLKQFHATHYHPSNARFFTYGNFPLEQHLKQIHEEALSKFQKIEPSTVVPAQTPWDKPREFQITCGPDSFATDPSKQTTISVSFLLPDITDTFEAFTLSLLSSLLTSGPNSPFYKALIESGLGTDFSPDVGYNGYTREAYFSVGLQGIAEKDIETVRSLIDRTIDEVVEKGFEDDRIEALLHKIEIQMKHQSTSFGLMLTSYIASCWNHDGDPVELLKLGNQLAKFRQCLQENPKFLQEKVKQYFKNNQHKLTLSMRPDDKYHEKQAQVEATKLKQKVEALSPGDRQQIYEKGLELRSQQSKPQDASCLPALKVSDIEPTIPVTELDVVLTAGDIPVQYCAQPTNGMVYFRAFSSLNTLPEELRPYVPLFCSVLTKLGCGLLDYREQAQQIELKTGGMSASPHVLPDDSHMDTYEQGVLFSSLCLDRNLPDMMQLWSEIFNNPCFEEEEHFKVLVKMTAQELANGIPDSGHLYASIRAGRTLTPAGDLQETFSGMDQVRLMKRIAEMTDIKPILRKLPRIKKHLLNGDNMRCSVNATPQQMPQTEKAVEDFLRSIGRSKKERRPVRPHTVEKPVPSSSGGDAHVPHGSQVIRKLVMEPTFKPWQMKTHFLMPFPVNYVGECIRTVPYTDPDHASLKILARLMTAKFLHTEIREKGGAYGGGAKLSHNGIFTLYSYRDPNTIETLQSFGKAVDWAKSGKFTQQDIDEAKLSVFSTVDAPVAPSDKGMDHFLYGLSDEMKQAHREQLFAVSHDKLLAVSDRYLGTGKSTHGLAILGPENPKIAKDPSWIIQ.

Residues 1–28 constitute a mitochondrion transit peptide; the sequence is MWRCGGRQGLCVLRRLSGGHAHHRAWRW. Zn(2+) is bound at residue His104. Residue Glu107 is the Proton acceptor of the active site. Residue His108 coordinates Zn(2+). A disulfide bridge links Cys119 with Cys556. Glu180 is a catalytic residue. Residue Glu205 coordinates Zn(2+). Residue Lys759 is modified to N6-acetyllysine. Lys770 carries the post-translational modification N6-acetyllysine; alternate. At Lys770 the chain carries N6-succinyllysine; alternate. A compositionally biased stretch (basic residues) spans 804–814; the sequence is GRSKKERRPVR. The interval 804–834 is disordered; it reads GRSKKERRPVRPHTVEKPVPSSSGGDAHVPH. N6-succinyllysine is present on Lys849. Lys884 is modified (N6-acetyllysine). Residue Lys946 is modified to N6-succinyllysine.

Belongs to the peptidase M16 family. PreP subfamily. In terms of assembly, monomer and homodimer; homodimerization is induced by binding of the substrate. Zn(2+) serves as cofactor. Post-translationally, a disulfide bond locks the enzyme in the closed conformation preventing substrate entry into the catalytic chamber. As to expression, widely expressed. Expressed at higher level in muscle and heart compared to brain, pancreas, liver, lung and placenta.

It localises to the mitochondrion. It is found in the mitochondrion matrix. Mainly exists in a closed and catalytically competent conformation but a closed-to-open switch allows substrate entry into the catalytic chamber. Substrate binding induces closure and dimerization. A disulfide bond may lock the enzyme in a closed conformation preventing substrate entry into the catalytic chamber, participating in redox regulation of the enzyme. Inhibited by metal-chelating agents. Inhibited by nickel and zinc excess, and slightly activated by manganese. Functionally, metalloendopeptidase of the mitochondrial matrix that functions in peptide cleavage and degradation rather than in protein processing. Has an ATP-independent activity. Specifically cleaves peptides in the range of 5 to 65 residues. Shows a preference for cleavage after small polar residues and before basic residues, but without any positional preference. Degrades the transit peptides of mitochondrial proteins after their cleavage. Also degrades other unstructured peptides. It is also able to degrade amyloid-beta protein 40, one of the peptides produced by APP processing, when it accumulates in mitochondrion. It is a highly efficient protease, at least toward amyloid-beta protein 40. Cleaves that peptide at a specific position and is probably not processive, releasing digested peptides intermediates that can be further cleaved subsequently. It is also able to degrade amyloid-beta protein 42. This chain is Presequence protease, mitochondrial, found in Homo sapiens (Human).